The sequence spans 657 residues: UvrABC system protein B (657 aa).

Residues 25-182 (NSIKSNNRAQ…KKLIEIQYER (158 aa)) enclose the Helicase ATP-binding domain. 38 to 45 (GVTGSGKT) contributes to the ATP binding site. Positions 91–114 (YYDYYQPEAYVPQTDTFIEKDASI) match the Beta-hairpin motif. Positions 429–595 (QIDDLYGEIN…TIIKDVRDII (167 aa)) constitute a Helicase C-terminal domain. The UVR domain maps to 621 to 656 (DKLIKDLTEEMLLAAKNLQFERAAELRDIINEIKDG).

It belongs to the UvrB family. In terms of assembly, forms a heterotetramer with UvrA during the search for lesions. Interacts with UvrC in an incision complex.

It localises to the cytoplasm. Its function is as follows. The UvrABC repair system catalyzes the recognition and processing of DNA lesions. A damage recognition complex composed of 2 UvrA and 2 UvrB subunits scans DNA for abnormalities. Upon binding of the UvrA(2)B(2) complex to a putative damaged site, the DNA wraps around one UvrB monomer. DNA wrap is dependent on ATP binding by UvrB and probably causes local melting of the DNA helix, facilitating insertion of UvrB beta-hairpin between the DNA strands. Then UvrB probes one DNA strand for the presence of a lesion. If a lesion is found the UvrA subunits dissociate and the UvrB-DNA preincision complex is formed. This complex is subsequently bound by UvrC and the second UvrB is released. If no lesion is found, the DNA wraps around the other UvrB subunit that will check the other stand for damage. This chain is UvrABC system protein B, found in Clostridium beijerinckii (strain ATCC 51743 / NCIMB 8052) (Clostridium acetobutylicum).